The chain runs to 115 residues: UPF0597 protein HI_0855 (115 aa).

The protein belongs to the UPF0597 family.

In Haemophilus influenzae (strain ATCC 51907 / DSM 11121 / KW20 / Rd), this protein is UPF0597 protein HI_0855.